A 216-amino-acid polypeptide reads, in one-letter code: Probable RNA 2'-phosphotransferase 2 (216 aa).

It belongs to the KptA/TPT1 family.

Functionally, removes the 2'-phosphate from RNA via an intermediate in which the phosphate is ADP-ribosylated by NAD followed by a presumed transesterification to release the RNA and generate ADP-ribose 1''-2''-cyclic phosphate (APPR&gt;P). May function as an ADP-ribosylase. The protein is Probable RNA 2'-phosphotransferase 2 (kptA2) of Archaeoglobus fulgidus (strain ATCC 49558 / DSM 4304 / JCM 9628 / NBRC 100126 / VC-16).